A 314-amino-acid chain; its full sequence is HTH-type transcriptional regulator LeuO (314 aa).

Positions 22 to 79 (VDLNLLTVFDAVMQEQNITRAAHVLGMSQPAVSNAVARLKVMFNDELFVRYGRGIQPT) constitute an HTH lysR-type domain. The segment at residues 39-58 (ITRAAHVLGMSQPAVSNAVA) is a DNA-binding region (H-T-H motif).

This sequence belongs to the LysR transcriptional regulatory family.

In terms of biological role, a global transcription factor. Activates transcription of the 9 following operons; yjjQ-bglJ, yjjP, acrEF, ybdO, yjcRQP, casABCDE12, rhsD-ybbC, fepE and gltF, in most cases it probably interferes with silencing by H-NS and activates transcription. Represses transcription of the 3 following operons; uxaCA, sdaCB and btsT. H-NS repression of the bgl operon, leading to the ability to metabolize some beta-glucosides. It also directly activates the bgl operon. Activation is H-NS and BglJ-RcsB independent. In Escherichia coli (strain K12), this protein is HTH-type transcriptional regulator LeuO (leuO).